We begin with the raw amino-acid sequence, 474 residues long: Phenolic acid decarboxylase (474 aa).

Mn(2+) contacts are provided by Asn161, His182, and Glu224. Prenylated FMN contacts are provided by residues 161 to 166 (NVGTYR) and 181 to 182 (MH). Glu273 (proton donor) is an active-site residue.

This sequence belongs to the UbiD family. YclC subfamily. It depends on prenylated FMN as a cofactor. Mn(2+) serves as cofactor.

It catalyses the reaction vanillate + H(+) = guaiacol + CO2. Functionally, involved in the non-oxidative decarboxylation and detoxification of phenolic derivatives under both aerobic and anaerobic conditions. Phenolic acid decarboxylase that catalyzes the reversible decarboxylation of vanillate. This Streptomyces sp. (strain D7) protein is Phenolic acid decarboxylase.